Here is a 218-residue protein sequence, read N- to C-terminus: Methylthioribulose-1-phosphate dehydratase (218 aa).

2 residues coordinate Zn(2+): histidine 107 and histidine 109.

This sequence belongs to the aldolase class II family. MtnB subfamily. The cofactor is Zn(2+).

It carries out the reaction 5-(methylsulfanyl)-D-ribulose 1-phosphate = 5-methylsulfanyl-2,3-dioxopentyl phosphate + H2O. It participates in amino-acid biosynthesis; L-methionine biosynthesis via salvage pathway; L-methionine from S-methyl-5-thio-alpha-D-ribose 1-phosphate: step 2/6. Its function is as follows. Catalyzes the dehydration of methylthioribulose-1-phosphate (MTRu-1-P) into 2,3-diketo-5-methylthiopentyl-1-phosphate (DK-MTP-1-P). In Xylella fastidiosa (strain Temecula1 / ATCC 700964), this protein is Methylthioribulose-1-phosphate dehydratase.